A 129-amino-acid polypeptide reads, in one-letter code: Sm-like protein LSM4 (129 aa).

The region spanning Leu-2–Val-75 is the Sm domain. Positions Val-79–Pro-90 are enriched in basic and acidic residues. The interval Val-79 to Gly-129 is disordered. The span at Arg-111–Gly-129 shows a compositional bias: gly residues.

Belongs to the snRNP Sm proteins family. Component of the heptameric LSM1-LSM7 complex that forms a seven-membered ring structure with a donut shape. The LSM subunits are arranged in the order LSM1, LSM2, LSM3, LSM6, LSM5, LSM7 and LSM4. LSM4 subunit interacts only with its two neighboring subunits, LSM1A or LSM1B and LSM7. Component of the heptameric LSM2-LSM8 complex that forms a seven-membered ring structure with a donut shape. The LSM subunits are arranged in the order LSM8, LSM2, LSM3, LSM6, LSM5, LSM7 and LSM4. LSM4 subunit interacts only with its two neighboring subunits, LSM8 and LSM7. In terms of processing, methylated by PMRT15/SKB1 in response to salt stress or abscisic acid (ABA) treatment. Expressed in roots, leaves, stems, flowers and siliques.

The protein resides in the cytoplasm. The protein localises to the nucleus. Component of LSM protein complexes, which are involved in RNA processing. Component of the cytoplasmic LSM1-LSM7 complex which is involved in mRNA degradation by promoting decapping and leading to accurate 5'-3' mRNA decay. The cytoplasmic LSM1-LSM7 complex regulates developmental gene expression by the decapping of specific development-related transcripts. Component of the nuclear LSM2-LSM8 complex which is involved splicing nuclear mRNAs. LSM2-LSM8 binds directly to the U6 small nuclear RNAs (snRNAs) and is essential for accurate splicing of selected development-related mRNAs through the stabilization of the spliceosomal U6 snRNA. Plays a critical role in the regulation of development-related gene expression. The chain is Sm-like protein LSM4 from Arabidopsis thaliana (Mouse-ear cress).